Reading from the N-terminus, the 317-residue chain is Probable deoxyhypusine synthase 1 (317 aa).

Lys-285 acts as the Nucleophile in catalysis.

The protein belongs to the deoxyhypusine synthase family. It depends on NAD(+) as a cofactor.

It carries out the reaction [eIF5A protein]-L-lysine + spermidine = [eIF5A protein]-deoxyhypusine + propane-1,3-diamine. It functions in the pathway protein modification; eIF5A hypusination. Its function is as follows. Catalyzes the NAD-dependent oxidative cleavage of spermidine and the subsequent transfer of the butylamine moiety of spermidine to the epsilon-amino group of a specific lysine residue of the eIF-5A precursor protein to form the intermediate deoxyhypusine residue. The sequence is that of Probable deoxyhypusine synthase 1 (dys1) from Methanosarcina acetivorans (strain ATCC 35395 / DSM 2834 / JCM 12185 / C2A).